The primary structure comprises 248 residues: Short-chain dehydrogenase/reductase iacG (248 aa).

Residues Ile14, Asn35, Lys41, Asp58, Arg120, and Val187 each coordinate NADP(+).

This sequence belongs to the short-chain dehydrogenases/reductases (SDR) family.

Its pathway is secondary metabolite biosynthesis. In terms of biological role, short-chain dehydrogenase/reductase; part of the gene cluster that mediates the biosynthesis of iso-A82775C, a enylepoxycyclohexane and biosynthetic precursor of the chloropestolide anticancer natural products. Within the cluster, the prenyltransferase iacE prenylates siccayne to generate pestalodiol E, using dimethylallyl diphosphate (DMAPP) as cosubstrate. The probable oxidoreductase iacF is then involved in the epoxidation of pestalodiol F to pestalodiol F, which is further converted to pestalofone A by the short-chain dehydrogenase/reductase iacG. Iso-A82775C is subsequently generated from pestalofone A by the short-chain dehydrogenase/reductase iacC. Iso-A82775C is further condensed with maldoxin via a Diels-Alder reaction to produce the anticancer natural products chloropestolides A to E. This chain is Short-chain dehydrogenase/reductase iacG, found in Pestalotiopsis fici (strain W106-1 / CGMCC3.15140).